The sequence spans 455 residues: ATP-dependent protease ATPase subunit HslU (455 aa).

ATP-binding positions include V23, 65–70, D266, E333, and R405; that span reads GVGKTE.

The protein belongs to the ClpX chaperone family. HslU subfamily. In terms of assembly, a double ring-shaped homohexamer of HslV is capped on each side by a ring-shaped HslU homohexamer. The assembly of the HslU/HslV complex is dependent on binding of ATP.

Its subcellular location is the cytoplasm. Its function is as follows. ATPase subunit of a proteasome-like degradation complex; this subunit has chaperone activity. The binding of ATP and its subsequent hydrolysis by HslU are essential for unfolding of protein substrates subsequently hydrolyzed by HslV. HslU recognizes the N-terminal part of its protein substrates and unfolds these before they are guided to HslV for hydrolysis. This is ATP-dependent protease ATPase subunit HslU from Xanthomonas oryzae pv. oryzae (strain MAFF 311018).